The primary structure comprises 317 residues: Putative HTH-type transcriptional regulatory protein TGAM_1316 (317 aa).

In terms of domain architecture, HTH cro/C1-type spans 131–189 (LKKLREKHGYSVGELASLLGVSRKSLLNYERNEQAVSLEVALRMEELFDEPIAEPIDVL). The segment at residues 142–161 (VGELASLLGVSRKSLLNYER) is a DNA-binding region (H-T-H motif).

This is Putative HTH-type transcriptional regulatory protein TGAM_1316 from Thermococcus gammatolerans (strain DSM 15229 / JCM 11827 / EJ3).